The primary structure comprises 161 residues: MKGAKSKGAAKADAKLAVKSKGAEKPAAKGKKGKAGKDPNKPKRAPSAFFVFMGEFREEFKQKNPKNKSVAAVGKAAGERWKSLSESEKAPYVAKANKLKGEYNKAIAAYNKGESAAAAAPKKAAAKEVEEEDEEESDKSKSEINDDDDDEGSDEDEDDDE.

Disordered regions lie at residues 1-46, 60-91, and 113-161; these read MKGA…KRAP, FKQK…EKAP, and GESA…DDDE. 2 stretches are compositionally biased toward basic and acidic residues: residues 10–27 and 77–89; these read AKAD…EKPA and AGER…ESEK. Residues 42–111 constitute a DNA-binding region (HMG box); it reads PKRAPSAFFV…EYNKAIAAYN (70 aa). Residues 114–123 are compositionally biased toward low complexity; that stretch reads ESAAAAAPKK. Over residues 145–161 the composition is skewed to acidic residues; sequence NDDDDDEGSDEDEDDDE.

The protein belongs to the HMGB family.

It is found in the nucleus. This is HMG1/2-like protein from Triticum aestivum (Wheat).